The chain runs to 123 residues: MSTLSNFTQTLEDVFRRIFITYMDNWRQNTTAEQEALQAKVDAENFYYVILYLMVMIGMFSFIIVAILVSTVKSKRREHSNDPYHQYIVEDWQEKYKSQILNLEESKATIHENIGAAGFKMSP.

Residues Asn6 and Asn29 are each glycosylated (N-linked (GlcNAc...) asparagine). Residues 49-69 (VILYLMVMIGMFSFIIVAILV) form a helical membrane-spanning segment. The Cytoplasmic segment spans residues 70-123 (STVKSKRREHSNDPYHQYIVEDWQEKYKSQILNLEESKATIHENIGAAGFKMSP).

The protein belongs to the potassium channel KCNE family. Interacts with KCNB1. Associates with KCNH2/ERG1. May associate with KCNQ2 and KCNQ3. Associates with HCN1 and probably HCN2. Heteromultimer with KCNC2. Interacts with KCNC2. Interacts with KCNQ1; forms a heterooligomer complex that targets to the membrane raft and leading to currents with an apparently instantaneous activation, a rapid deactivation process and a linear current-voltage relationship and decreases the amplitude of the outward current. As to expression, highly expressed in brain, heart, skeletal muscle, pancreas, placenta, kidney, colon and thymus. A small but significant expression is found in liver, ovary, testis, prostate, small intestine and leukocytes. Very low expression, nearly undetectable, in lung and spleen.

It is found in the cell membrane. The protein resides in the apical cell membrane. Its function is as follows. Ancillary protein that functions as a regulatory subunit of the voltage-gated potassium (Kv) channel complex composed of pore-forming and potassium-conducting alpha subunits and of regulatory beta subunits. KCNE2 beta subunit modulates the gating kinetics and enhances stability of the channel complex. Alters the gating of the delayed rectifier Kv channel containing KCNB1 alpha subunit. Associates with KCNH2/HERG alpha subunit Kv channel to form the rapidly activating component of the delayed rectifying potassium current (IKr) in heart. May associate with KCNQ2 and/or KCNQ3 alpha subunits to modulate the native M-type current. May associate with HCN1 and HCN2 channel subunits to increase potassium current. Forms a heterooligomer complex with KCNQ1/KVLQT1 alpha subunits which leads to currents with an apparently instantaneous activation, a rapid deactivation process and a linear current-voltage relationship and decreases the amplitude of the outward current. KCNQ1-KCNE2 channel associates with Na(+)-coupled myo-inositol symporter in the apical membrane of choroid plexus epithelium and regulates the myo-inositol gradient between blood and cerebrospinal fluid with an impact on neuron excitability. The sequence is that of Potassium voltage-gated channel subfamily E member 2 from Homo sapiens (Human).